A 239-amino-acid chain; its full sequence is Purine nucleoside phosphorylase DeoD-type (239 aa).

His-5 is an a purine D-ribonucleoside binding site. Phosphate-binding positions include Gly-21, Arg-25, Arg-44, and 88–91; that span reads RVGS. A purine D-ribonucleoside contacts are provided by residues 180 to 182 and 204 to 205; these read EME and SD. Asp-205 serves as the catalytic Proton donor.

Belongs to the PNP/UDP phosphorylase family. As to quaternary structure, homohexamer; trimer of homodimers.

It carries out the reaction a purine D-ribonucleoside + phosphate = a purine nucleobase + alpha-D-ribose 1-phosphate. The catalysed reaction is a purine 2'-deoxy-D-ribonucleoside + phosphate = a purine nucleobase + 2-deoxy-alpha-D-ribose 1-phosphate. Its function is as follows. Catalyzes the reversible phosphorolytic breakdown of the N-glycosidic bond in the beta-(deoxy)ribonucleoside molecules, with the formation of the corresponding free purine bases and pentose-1-phosphate. The polypeptide is Purine nucleoside phosphorylase DeoD-type (Cronobacter sakazakii (strain ATCC BAA-894) (Enterobacter sakazakii)).